Reading from the N-terminus, the 528-residue chain is Drimenol cyclase drtB (528 aa).

It belongs to the HAD-like hydrolase superfamily.

The catalysed reaction is (2E,6E)-farnesyl diphosphate + H2O = (5S,9S,10S)-drim-7-en-11-ol + diphosphate. It participates in secondary metabolite biosynthesis; terpenoid biosynthesis. Drimenol cyclase; part of the gene cluster that mediates the biosynthesis of various drimane-type sesquiterpene esters, compounds that exhibit diverse biological activities and are widely present in eukaryotes. The pathway begins with the synthesis of the backbone drimenol by the terpene cyclase drtB using farnesyl pyrophosphate (FPP) as substrate. The cytochrome P450 monooxygenase drtD is then responsible for the hydroxylations at C-6, C-9 and C-12, as well as the oxidation of hydroxyl groups at C-6 and C-11 to a ketone and an aldehyde, respectively. Then, the biosynthesis can go in two directions, either the hydroxylated drimenol is further hydroxylated at C-2 and C-3 by an enzyme(s) not associated with the drt cluster, or the FAD-binding oxidoreductase drtC further oxidizes C-11 or C-12 to form the butyrolactone ring. DrtB, drtD and drtC are solely responsible for the formation of the different drimane structures observed during drimane sesquiterpenes biosynthesis. The polyketide synthase drtA synthesizes different lengths (C6 and C8) of PKS chains, which are then oxidized to varying degrees by the short-chain dehydrogenase drtF. Finally, these PKS chains are transferred onto drimane sesquiterpenes by the acyltransferase drtE, forming the sesquiterpene esters. In addition to the different fatty acyl-CoA chains produced by drtA, drtE is also able to use cinnamoyl-CoA as a substrate. This chain is Drimenol cyclase drtB, found in Aspergillus calidoustus.